A 243-amino-acid chain; its full sequence is Carboxy-S-adenosyl-L-methionine synthase (243 aa).

Residues Tyr39, 64–66 (GCS), Asn132, and Arg199 each bind S-adenosyl-L-methionine.

The protein belongs to the class I-like SAM-binding methyltransferase superfamily. Cx-SAM synthase family. As to quaternary structure, homodimer.

It carries out the reaction prephenate + S-adenosyl-L-methionine = carboxy-S-adenosyl-L-methionine + 3-phenylpyruvate + H2O. Catalyzes the conversion of S-adenosyl-L-methionine (SAM) to carboxy-S-adenosyl-L-methionine (Cx-SAM). The polypeptide is Carboxy-S-adenosyl-L-methionine synthase (Alteromonas mediterranea (strain DSM 17117 / CIP 110805 / LMG 28347 / Deep ecotype)).